A 102-amino-acid chain; its full sequence is Omega-hexatoxin-Hi2b (102 aa).

An N-terminal signal peptide occupies residues 1-23 (MKFSKLSLTLALILTQAIFVLCG). The propeptide occupies 24-56 (KINEDFMENGLESHALHDEIRKPIDTEKADAER). 3 disulfides stabilise this stretch: cysteine 61/cysteine 75, cysteine 68/cysteine 81, and cysteine 74/cysteine 86. Leucine 98 is subject to Leucine amide. Residues 100–102 (RAL) constitute a propeptide that is removed on maturation.

It belongs to the neurotoxin 15 family. 02 (omega-actx) subfamily. As to expression, expressed by the venom gland.

The protein resides in the secreted. Functionally, potent inhibitor of insect, but not mammalian, voltage-gated calcium channels (Cav). In Hadronyche infensa (Fraser island funnel-web spider), this protein is Omega-hexatoxin-Hi2b.